Consider the following 1411-residue polypeptide: DNA-directed RNA polymerase subunit beta' (1411 aa).

Zn(2+)-binding residues include Cys-69, Cys-71, Cys-84, and Cys-87. Positions 461, 463, and 465 each coordinate Mg(2+). Cys-809, Cys-883, Cys-890, and Cys-893 together coordinate Zn(2+).

This sequence belongs to the RNA polymerase beta' chain family. In terms of assembly, the RNAP catalytic core consists of 2 alpha, 1 beta, 1 beta' and 1 omega subunit. When a sigma factor is associated with the core the holoenzyme is formed, which can initiate transcription. Requires Mg(2+) as cofactor. The cofactor is Zn(2+).

It carries out the reaction RNA(n) + a ribonucleoside 5'-triphosphate = RNA(n+1) + diphosphate. Its function is as follows. DNA-dependent RNA polymerase catalyzes the transcription of DNA into RNA using the four ribonucleoside triphosphates as substrates. The sequence is that of DNA-directed RNA polymerase subunit beta' from Ehrlichia ruminantium (strain Gardel).